We begin with the raw amino-acid sequence, 636 residues long: Chaperone protein DnaK (636 aa).

Phosphothreonine; by autocatalysis is present on T198. The interval 598–636 is disordered; it reads YAAKEQPGEHGETGSGEQARKESGKDENVVDADFEEVKK. The segment covering 603–625 has biased composition (basic and acidic residues); the sequence is QPGEHGETGSGEQARKESGKDEN. Residues 626-636 are compositionally biased toward acidic residues; that stretch reads VVDADFEEVKK.

It belongs to the heat shock protein 70 family.

Functionally, acts as a chaperone. The protein is Chaperone protein DnaK of Pelobacter propionicus (strain DSM 2379 / NBRC 103807 / OttBd1).